The chain runs to 343 residues: Anthranilate phosphoribosyltransferase (343 aa).

5-phospho-alpha-D-ribose 1-diphosphate-binding positions include Gly78, 81-82 (GD), Thr86, 88-91 (NIST), 106-114 (KHGNRSVSS), and Ser118. Residue Gly78 coordinates anthranilate. Ser90 is a Mg(2+) binding site. Anthranilate is bound at residue Asn109. Arg164 contacts anthranilate. Residues Asp223 and Glu224 each contribute to the Mg(2+) site.

It belongs to the anthranilate phosphoribosyltransferase family. As to quaternary structure, homodimer. Mg(2+) serves as cofactor.

The enzyme catalyses N-(5-phospho-beta-D-ribosyl)anthranilate + diphosphate = 5-phospho-alpha-D-ribose 1-diphosphate + anthranilate. Its pathway is amino-acid biosynthesis; L-tryptophan biosynthesis; L-tryptophan from chorismate: step 2/5. In terms of biological role, catalyzes the transfer of the phosphoribosyl group of 5-phosphorylribose-1-pyrophosphate (PRPP) to anthranilate to yield N-(5'-phosphoribosyl)-anthranilate (PRA). This is Anthranilate phosphoribosyltransferase from Chlamydia caviae (strain ATCC VR-813 / DSM 19441 / 03DC25 / GPIC) (Chlamydophila caviae).